We begin with the raw amino-acid sequence, 201 residues long: Peptide deformylase (201 aa).

Fe cation-binding residues include Cys121 and His163. The active site involves Glu164. Residue His167 participates in Fe cation binding.

The protein belongs to the polypeptide deformylase family. Requires Fe(2+) as cofactor.

It catalyses the reaction N-terminal N-formyl-L-methionyl-[peptide] + H2O = N-terminal L-methionyl-[peptide] + formate. Removes the formyl group from the N-terminal Met of newly synthesized proteins. Requires at least a dipeptide for an efficient rate of reaction. N-terminal L-methionine is a prerequisite for activity but the enzyme has broad specificity at other positions. The chain is Peptide deformylase from Synechococcus sp. (strain CC9605).